A 263-amino-acid chain; its full sequence is Inactive adenylate kinase (263 aa).

Belongs to the adenylate kinase family.

Its subcellular location is the cytoplasm. Its function is as follows. Lacks adenylate kinase activity. The protein is Inactive adenylate kinase of Plasmodium falciparum (isolate 3D7).